The sequence spans 276 residues: Undecaprenyl-diphosphatase (276 aa).

The next 7 membrane-spanning stretches (helical) occupy residues 1–21 (MSWL…FLPV), 39–59 (AGAS…LVYF), 84–104 (YWLG…GLLF), 115–135 (LWLV…AEYY), 188–208 (FGFL…LPDA), 222–242 (QLFV…AWFL), and 253–273 (FVGY…AGVV).

This sequence belongs to the UppP family.

The protein localises to the cell membrane. It carries out the reaction di-trans,octa-cis-undecaprenyl diphosphate + H2O = di-trans,octa-cis-undecaprenyl phosphate + phosphate + H(+). Its function is as follows. Catalyzes the dephosphorylation of undecaprenyl diphosphate (UPP). Confers resistance to bacitracin. The sequence is that of Undecaprenyl-diphosphatase from Mycolicibacterium vanbaalenii (strain DSM 7251 / JCM 13017 / BCRC 16820 / KCTC 9966 / NRRL B-24157 / PYR-1) (Mycobacterium vanbaalenii).